Reading from the N-terminus, the 432-residue chain is Cysteine desulfurase, mitosomal (432 aa).

Pyridoxal 5'-phosphate contacts are provided by residues 102–103 (AT), Gln-212, and 232–234 (CAH). N6-(pyridoxal phosphate)lysine is present on Lys-235. Thr-272 serves as a coordination point for pyridoxal 5'-phosphate. Catalysis depends on Cys-357, which acts as the Cysteine persulfide intermediate. Cys-357 contributes to the [2Fe-2S] cluster binding site.

It belongs to the class-V pyridoxal-phosphate-dependent aminotransferase family. NifS/IscS subfamily. Pyridoxal 5'-phosphate serves as cofactor.

Its subcellular location is the mitosome. It carries out the reaction (sulfur carrier)-H + L-cysteine = (sulfur carrier)-SH + L-alanine. Catalyzes the removal of elemental sulfur from cysteine to produce alanine. It supplies the inorganic sulfur for iron-sulfur (Fe-S) clusters in mitosomes. This Encephalitozoon cuniculi (strain GB-M1) (Microsporidian parasite) protein is Cysteine desulfurase, mitosomal.